A 154-amino-acid chain; its full sequence is MGLSDGEWQLVLNVWGKVEADISGHGQEVLIRLFKGHPETLEKFDKFKHLKSEDEMKASEDLKKHGATVLTALGGILKKKGHHEAEIKPLAQSHATKHKIPVKYLEFISECIIQVLQSKHPGDFGADAQGAMNKALELFRKDMASNYKELGFQG.

The 147-residue stretch at 2–148 (GLSDGEWQLV…FRKDMASNYK (147 aa)) folds into the Globin domain. S4 bears the Phosphoserine mark. H65 serves as a coordination point for nitrite. H65 lines the O2 pocket. T68 is subject to Phosphothreonine. Heme b is bound at residue H94.

Belongs to the globin family. As to quaternary structure, monomeric.

It is found in the cytoplasm. It localises to the sarcoplasm. The catalysed reaction is Fe(III)-heme b-[protein] + nitric oxide + H2O = Fe(II)-heme b-[protein] + nitrite + 2 H(+). The enzyme catalyses H2O2 + AH2 = A + 2 H2O. Functionally, monomeric heme protein which primary function is to store oxygen and facilitate its diffusion within muscle tissues. Reversibly binds oxygen through a pentacoordinated heme iron and enables its timely and efficient release as needed during periods of heightened demand. Depending on the oxidative conditions of tissues and cells, and in addition to its ability to bind oxygen, it also has a nitrite reductase activity whereby it regulates the production of bioactive nitric oxide. Under stress conditions, like hypoxia and anoxia, it also protects cells against reactive oxygen species thanks to its pseudoperoxidase activity. The chain is Myoglobin (MB) from Gorilla gorilla beringei (Mountain gorilla).